A 220-amino-acid polypeptide reads, in one-letter code: Thiamine-phosphate synthase (220 aa).

4-amino-2-methyl-5-(diphosphooxymethyl)pyrimidine contacts are provided by residues 46–50 (QFREK) and N83. Mg(2+) contacts are provided by D84 and D103. Residue S122 coordinates 4-amino-2-methyl-5-(diphosphooxymethyl)pyrimidine. 149 to 151 (TNS) provides a ligand contact to 2-[(2R,5Z)-2-carboxy-4-methylthiazol-5(2H)-ylidene]ethyl phosphate. A 4-amino-2-methyl-5-(diphosphooxymethyl)pyrimidine-binding site is contributed by K152. 2-[(2R,5Z)-2-carboxy-4-methylthiazol-5(2H)-ylidene]ethyl phosphate contacts are provided by residues G181 and 201 to 202 (IS).

It belongs to the thiamine-phosphate synthase family. Mg(2+) is required as a cofactor.

It catalyses the reaction 2-[(2R,5Z)-2-carboxy-4-methylthiazol-5(2H)-ylidene]ethyl phosphate + 4-amino-2-methyl-5-(diphosphooxymethyl)pyrimidine + 2 H(+) = thiamine phosphate + CO2 + diphosphate. It carries out the reaction 2-(2-carboxy-4-methylthiazol-5-yl)ethyl phosphate + 4-amino-2-methyl-5-(diphosphooxymethyl)pyrimidine + 2 H(+) = thiamine phosphate + CO2 + diphosphate. The enzyme catalyses 4-methyl-5-(2-phosphooxyethyl)-thiazole + 4-amino-2-methyl-5-(diphosphooxymethyl)pyrimidine + H(+) = thiamine phosphate + diphosphate. The protein operates within cofactor biosynthesis; thiamine diphosphate biosynthesis; thiamine phosphate from 4-amino-2-methyl-5-diphosphomethylpyrimidine and 4-methyl-5-(2-phosphoethyl)-thiazole: step 1/1. Functionally, condenses 4-methyl-5-(beta-hydroxyethyl)thiazole monophosphate (THZ-P) and 2-methyl-4-amino-5-hydroxymethyl pyrimidine pyrophosphate (HMP-PP) to form thiamine monophosphate (TMP). This Mannheimia succiniciproducens (strain KCTC 0769BP / MBEL55E) protein is Thiamine-phosphate synthase.